A 205-amino-acid chain; its full sequence is MITIVDYQMGNLRSVQKAVERSGVEAEITSDASQIAAAERLILPGVGAFGDAIGEIRRRDLEKPIKDFIASGKPFLGICLGLQMLFEQGFEGGTHEGLGVLGGDVVAFELPAEFKVPHMGWNAVDVKDAGADLGIQSGTHFYFVHSYFVRPADPSVVALTCDYGGEFCAAVRRGNLMATQFHPEKSQGDGLRLMQRFATAPVEVA.

Residues 1 to 205 (MITIVDYQMG…RFATAPVEVA (205 aa)) form the Glutamine amidotransferase type-1 domain. The active-site Nucleophile is cysteine 79. Active-site residues include histidine 182 and glutamate 184.

In terms of assembly, heterodimer of HisH and HisF.

It localises to the cytoplasm. The enzyme catalyses 5-[(5-phospho-1-deoxy-D-ribulos-1-ylimino)methylamino]-1-(5-phospho-beta-D-ribosyl)imidazole-4-carboxamide + L-glutamine = D-erythro-1-(imidazol-4-yl)glycerol 3-phosphate + 5-amino-1-(5-phospho-beta-D-ribosyl)imidazole-4-carboxamide + L-glutamate + H(+). It catalyses the reaction L-glutamine + H2O = L-glutamate + NH4(+). It functions in the pathway amino-acid biosynthesis; L-histidine biosynthesis; L-histidine from 5-phospho-alpha-D-ribose 1-diphosphate: step 5/9. Its function is as follows. IGPS catalyzes the conversion of PRFAR and glutamine to IGP, AICAR and glutamate. The HisH subunit catalyzes the hydrolysis of glutamine to glutamate and ammonia as part of the synthesis of IGP and AICAR. The resulting ammonia molecule is channeled to the active site of HisF. This Rhodopirellula baltica (strain DSM 10527 / NCIMB 13988 / SH1) protein is Imidazole glycerol phosphate synthase subunit HisH.